The chain runs to 1638 residues: DNA polymerase III PolC-type (1638 aa).

A disordered region spans residues 193–212; sequence SEIKKQRSEERESKNTREAK. A compositionally biased stretch (basic and acidic residues) spans 194–212; the sequence is EIKKQRSEERESKNTREAK. Positions 596–752 constitute an Exonuclease domain; that stretch reads YVVFDVETTG…FDAEATGRLL (157 aa).

It belongs to the DNA polymerase type-C family. PolC subfamily.

It is found in the cytoplasm. The enzyme catalyses DNA(n) + a 2'-deoxyribonucleoside 5'-triphosphate = DNA(n+1) + diphosphate. In terms of biological role, required for replicative DNA synthesis. This DNA polymerase also exhibits 3' to 5' exonuclease activity. This is DNA polymerase III PolC-type from Lactococcus lactis subsp. lactis (strain IL1403) (Streptococcus lactis).